A 645-amino-acid chain; its full sequence is ATP-dependent zinc metalloprotease FtsH 1 (645 aa).

Residues 1-6 are Cytoplasmic-facing; it reads MRSTQK. The helical transmembrane segment at 7-27 threads the bilayer; that stretch reads TLALWFFLIIMAVFLFQAYES. At 28–110 the chain is on the periplasmic side; that stretch reads KQQKAIADFN…NYERADNGGF (83 aa). The chain crosses the membrane as a helical span at residues 111–131; that stretch reads FQSLLVNWLPLILIVAMFLFI. Residues 132 to 645 are Cytoplasmic-facing; that stretch reads MRQIQAGGGK…PVGNTGPVTI (514 aa). Position 203–210 (203–210) interacts with ATP; that stretch reads GSPGTGKT. Position 425 (histidine 425) interacts with Zn(2+). Glutamate 426 is an active-site residue. Residues histidine 429 and aspartate 501 each coordinate Zn(2+).

This sequence in the central section; belongs to the AAA ATPase family. It in the C-terminal section; belongs to the peptidase M41 family. In terms of assembly, homohexamer. Zn(2+) is required as a cofactor.

It is found in the cell inner membrane. Its function is as follows. Acts as a processive, ATP-dependent zinc metallopeptidase for both cytoplasmic and membrane proteins. Plays a role in the quality control of integral membrane proteins. The chain is ATP-dependent zinc metalloprotease FtsH 1 from Bdellovibrio bacteriovorus (strain ATCC 15356 / DSM 50701 / NCIMB 9529 / HD100).